The following is a 227-amino-acid chain: 7-cyano-7-deazaguanine synthase (227 aa).

Residue 9–19 participates in ATP binding; it reads LSGGLDSATVL. Residues Cys-189, Cys-199, Cys-202, and Cys-205 each contribute to the Zn(2+) site.

This sequence belongs to the QueC family. Zn(2+) serves as cofactor.

The catalysed reaction is 7-carboxy-7-deazaguanine + NH4(+) + ATP = 7-cyano-7-deazaguanine + ADP + phosphate + H2O + H(+). It participates in purine metabolism; 7-cyano-7-deazaguanine biosynthesis. Functionally, catalyzes the ATP-dependent conversion of 7-carboxy-7-deazaguanine (CDG) to 7-cyano-7-deazaguanine (preQ(0)). This chain is 7-cyano-7-deazaguanine synthase, found in Cupriavidus taiwanensis (strain DSM 17343 / BCRC 17206 / CCUG 44338 / CIP 107171 / LMG 19424 / R1) (Ralstonia taiwanensis (strain LMG 19424)).